The sequence spans 488 residues: N-succinylglutamate 5-semialdehyde dehydrogenase (488 aa).

221–226 contacts NAD(+); it reads GSSRTG. Active-site residues include Glu-244 and Cys-278.

It belongs to the aldehyde dehydrogenase family. AstD subfamily.

It carries out the reaction N-succinyl-L-glutamate 5-semialdehyde + NAD(+) + H2O = N-succinyl-L-glutamate + NADH + 2 H(+). The protein operates within amino-acid degradation; L-arginine degradation via AST pathway; L-glutamate and succinate from L-arginine: step 4/5. In terms of biological role, catalyzes the NAD-dependent reduction of succinylglutamate semialdehyde into succinylglutamate. The protein is N-succinylglutamate 5-semialdehyde dehydrogenase of Pseudomonas syringae pv. syringae (strain B728a).